We begin with the raw amino-acid sequence, 187 residues long: Mitochondrial import receptor subunit TOM20-4 (187 aa).

Met1 bears the N-acetylmethionine mark. Residues 1-160 are Cytoplasmic-facing; sequence MDMQNENERL…QKKTSEFKYD (160 aa). A TPR repeat occupies 84–117; the sequence is LSFGFLSSDQTEASDNFEKASQFFQLAVEEQPES. A helical transmembrane segment spans residues 161–178; that stretch reads VFGWVILASYVVAWISFA. The Mitochondrial intermembrane portion of the chain corresponds to 179 to 187; that stretch reads NSQTPVSRQ. Residues 179–187 carry the AKR2A-binding sequence (ABS) required for mitochondrion outer membrane targeting motif; it reads NSQTPVSRQ.

Belongs to the Tom20 family. As to quaternary structure, forms part of the preprotein translocase complex of the outer mitochondrial membrane (TOM complex) which consists of at least 6 different proteins (TOM5, TOM6, TOM7, TOM20, TOM22/TOM9 and TOM40). Interacts with a variety of mitochondrial precursor proteins. Interacts with AKR2A. Component of a mitochondrial large protein complex that contains, at least, MIC60, DGS1, TOM40, TOM20 proteins, and petC/RISP. The N-terminus is blocked. Expressed in roots, flowers, young cotyledons and leaves.

It localises to the mitochondrion outer membrane. Central component of the receptor complex responsible for the recognition and translocation of cytosolically synthesized mitochondrial preproteins. Together with TOM22 functions as the transit peptide receptor at the surface of the mitochondrion outer membrane and facilitates the movement of preproteins into the translocation pore. The sequence is that of Mitochondrial import receptor subunit TOM20-4 from Arabidopsis thaliana (Mouse-ear cress).